We begin with the raw amino-acid sequence, 79 residues long: MKLTCVLIITVLFLTASQLITADYSRDQRQYRAVRLGDEMRNFKGARDCGGQGEGCYTQPCCPGLRCRGGGTGGGACQL.

The N-terminal stretch at Met1–Ala22 is a signal peptide. Residues Asp23 to Arg47 constitute a propeptide that is removed on maturation. 3 disulfides stabilise this stretch: Cys49–Cys62, Cys56–Cys67, and Cys61–Cys77. A 4-hydroxyproline mark is found at Pro60 and Pro63.

It belongs to the conotoxin O1 superfamily. Expressed by the venom duct.

It localises to the secreted. Functionally, ion channel inhibitor that inhibits the increase in intracellular calcium upon depolarization in DRG neurons. In vivo, both intraperitoneal and intracranial injections into mice induce hyperactivity. This is Conotoxin Vi6.3 from Conus virgo (Virgin cone).